An 847-amino-acid polypeptide reads, in one-letter code: Ras GTPase-activating protein 2 (847 aa).

Low complexity predominate over residues 1–21; sequence MAAAAPAAAASPEAPAVSGSA. Positions 1–31 are disordered; that stretch reads MAAAAPAAAASPEAPAVSGSADPETGDEDSR. The residue at position 2 (A2) is an N-acetylalanine. 2 consecutive C2 domains span residues 19 to 137 and 148 to 288; these read GSAD…ETWF and VQGK…QAWY. The Ras-GAP domain maps to 371-588; sequence NKLVPFITAV…TDVKKFLDEI (218 aa). Phosphoserine is present on S554. The PH domain occupies 603–704; the sequence is VHLKEGEMYK…WIDVLCRVSR (102 aa). Residues 706–742 form a Btk-type zinc finger; that stretch reads NHNRLSSFHPSAYLNGNWLCCQETSESTPGCKPCTAG. 4 residues coordinate Zn(2+): H714, C725, C726, and C736. Residues 819-847 are disordered; the sequence is DEPHEKYRKKRSSSAKYGSKENPIVGKIS.

Its subcellular location is the cell membrane. In terms of biological role, inhibitory regulator of the Ras-cyclic AMP pathway. Binds inositol tetrakisphosphate (IP4) and phospholipids. The polypeptide is Ras GTPase-activating protein 2 (Rasa2) (Mus musculus (Mouse)).